The chain runs to 1060 residues: Isoleucine--tRNA ligase (1060 aa).

A 'HIGH' region motif is present at residues 55 to 65 (PTANGTPGVHH). Positions 608–612 (KMSKH) match the 'KMSKS' region motif. K611 is an ATP binding site.

The protein belongs to the class-I aminoacyl-tRNA synthetase family. IleS type 2 subfamily. Monomer. Zn(2+) serves as cofactor.

Its subcellular location is the cytoplasm. It catalyses the reaction tRNA(Ile) + L-isoleucine + ATP = L-isoleucyl-tRNA(Ile) + AMP + diphosphate. Catalyzes the attachment of isoleucine to tRNA(Ile). As IleRS can inadvertently accommodate and process structurally similar amino acids such as valine, to avoid such errors it has two additional distinct tRNA(Ile)-dependent editing activities. One activity is designated as 'pretransfer' editing and involves the hydrolysis of activated Val-AMP. The other activity is designated 'posttransfer' editing and involves deacylation of mischarged Val-tRNA(Ile). The chain is Isoleucine--tRNA ligase from Thermobifida fusca (strain YX).